Here is a 172-residue protein sequence, read N- to C-terminus: C-phycocyanin beta subunit (172 aa).

Position 72 is an N4-methylasparagine (asparagine 72). (2R,3E)-phycocyanobilin contacts are provided by cysteine 82 and cysteine 153.

It belongs to the phycobiliprotein family. In terms of assembly, the alpha and beta subunits exhibit high affinity for one another and form heterodimers. These heterodimers form heterohexamers of 3 alpha and 3 beta subunits which, in turn, aggregate into a heterododecamer consisting of 2 heterohexamers. Contains two covalently linked bilin chromophores.

The protein resides in the cellular thylakoid membrane. Functionally, light-harvesting photosynthetic bile pigment-protein from the phycobiliprotein complex (phycobilisome, PBS). Phycocyanin is the major phycobiliprotein in the PBS rod. This Arthrospira platensis (Spirulina platensis) protein is C-phycocyanin beta subunit (cpcB).